Reading from the N-terminus, the 355-residue chain is N-acetyl-gamma-glutamyl-phosphate reductase (355 aa).

Residue cysteine 152 is part of the active site.

It belongs to the NAGSA dehydrogenase family. Type 1 subfamily.

The protein localises to the cytoplasm. It carries out the reaction N-acetyl-L-glutamate 5-semialdehyde + phosphate + NADP(+) = N-acetyl-L-glutamyl 5-phosphate + NADPH + H(+). The protein operates within amino-acid biosynthesis; L-arginine biosynthesis; N(2)-acetyl-L-ornithine from L-glutamate: step 3/4. Catalyzes the NADPH-dependent reduction of N-acetyl-5-glutamyl phosphate to yield N-acetyl-L-glutamate 5-semialdehyde. This chain is N-acetyl-gamma-glutamyl-phosphate reductase, found in Psychrobacter cryohalolentis (strain ATCC BAA-1226 / DSM 17306 / VKM B-2378 / K5).